The primary structure comprises 718 residues: F-box/LRR-repeat protein 18 (718 aa).

One can recognise an F-box domain in the interval G25–V72. LRR repeat units lie at residues D77–G103, C104–G128, C129–V153, K177–F201, C324–G352, E367–A392, A393–V422, C468–G492, A516–Q540, P542–N567, G572–Q597, and Y599–S623.

Directly interacts with SKP1 and CUL1.

Substrate-recognition component of the SCF (SKP1-CUL1-F-box protein)-type E3 ubiquitin ligase complex. This is F-box/LRR-repeat protein 18 (FBXL18) from Homo sapiens (Human).